Consider the following 122-residue polypeptide: Large ribosomal subunit protein uL14 (122 aa).

The protein belongs to the universal ribosomal protein uL14 family. As to quaternary structure, part of the 50S ribosomal subunit. Forms a cluster with proteins L3 and L19. In the 70S ribosome, L14 and L19 interact and together make contacts with the 16S rRNA in bridges B5 and B8.

Its function is as follows. Binds to 23S rRNA. Forms part of two intersubunit bridges in the 70S ribosome. The polypeptide is Large ribosomal subunit protein uL14 (Natranaerobius thermophilus (strain ATCC BAA-1301 / DSM 18059 / JW/NM-WN-LF)).